The chain runs to 220 residues: Sericin-2 (220 aa).

Low complexity-rich tracts occupy residues 1–131 and 141–155; these read SSST…ASSS and NESS…QNSA. The disordered stretch occupies residues 1–220; sequence SSSTNNSSGS…SSSSSSWSSA (220 aa). Positions 156–165 are enriched in polar residues; the sequence is TRSQVINADG. The segment covering 166–220 has biased composition (low complexity); it reads SQSSSSSSSSASNQASATSSSSVSADGSESESSSSSSSSSSSSSESSSSSSWSSA.

As to expression, produced exclusively in the middle (MSG) section of silk glands.

It is found in the secreted. Functionally, provides the silk fibroin thread with a sticky coating. Acts as a cement by sticking silk threads together. The protein is Sericin-2 (SER2) of Galleria mellonella (Greater wax moth).